Consider the following 109-residue polypeptide: METKPNALTGTSLSSTSGQTTQKSITLQNSENKYIPQNSSETFGLMAILNLALLLWTLLATLRVTLQKNWPTETTKTTTITQFTTLQKNTPSAKNGLKNTTNKHSHEDM.

Positions 1–25 (METKPNALTGTSLSSTSGQTTQKSI) are disordered. Low complexity predominate over residues 8-22 (LTGTSLSSTSGQTTQ). Residues 42 to 62 (TFGLMAILNLALLLWTLLATL) form a helical membrane-spanning segment. Residues 84 to 109 (TTLQKNTPSAKNGLKNTTNKHSHEDM) form a disordered region. The span at 91-102 (PSAKNGLKNTTN) shows a compositional bias: polar residues.

It localises to the host membrane. This is an uncharacterized protein from Bdellovibrio phage phiMH2K (Bacteriophage phiMH2K).